A 199-amino-acid chain; its full sequence is Replication protein (199 aa).

Belongs to the Gram-positive plasmids replication protein type 2 family.

Is essential for plasmid replication. Nicks the positive strand at the plus origin of replication. The polypeptide is Replication protein (repF) (Staphylococcus aureus).